A 455-amino-acid polypeptide reads, in one-letter code: Phosphoglucosamine mutase (455 aa).

Ser-107 functions as the Phosphoserine intermediate in the catalytic mechanism. Mg(2+)-binding residues include Ser-107, Asp-247, Asp-249, and Asp-251. Residue Ser-107 is modified to Phosphoserine.

This sequence belongs to the phosphohexose mutase family. Mg(2+) is required as a cofactor. Post-translationally, activated by phosphorylation.

It catalyses the reaction alpha-D-glucosamine 1-phosphate = D-glucosamine 6-phosphate. In terms of biological role, catalyzes the conversion of glucosamine-6-phosphate to glucosamine-1-phosphate. In Leuconostoc citreum (strain KM20), this protein is Phosphoglucosamine mutase.